We begin with the raw amino-acid sequence, 220 residues long: Ribosomal RNA small subunit methyltransferase Nep1 (220 aa).

Residues G178, G183, and 196–201 each bind S-adenosyl-L-methionine; that span reads LYREPL.

The protein belongs to the class IV-like SAM-binding methyltransferase superfamily. RNA methyltransferase NEP1 family. In terms of assembly, homodimer.

It carries out the reaction a pseudouridine in rRNA + S-adenosyl-L-methionine = an N(1)-methylpseudouridine in rRNA + S-adenosyl-L-homocysteine + H(+). In terms of biological role, methyltransferase involved in ribosomal biogenesis. Specifically catalyzes the N1-methylation of the pseudouridine corresponding to position 914 in M.jannaschii 16S rRNA. The sequence is that of Ribosomal RNA small subunit methyltransferase Nep1 from Thermococcus kodakarensis (strain ATCC BAA-918 / JCM 12380 / KOD1) (Pyrococcus kodakaraensis (strain KOD1)).